The following is a 374-amino-acid chain: Erythronate-4-phosphate dehydrogenase (374 aa).

Residues S45 and T67 each coordinate substrate. An NAD(+)-binding site is contributed by D147. R208 is a catalytic residue. An NAD(+)-binding site is contributed by D232. Residue E237 is part of the active site. The active-site Proton donor is H254. Position 257 (G257) interacts with NAD(+).

This sequence belongs to the D-isomer specific 2-hydroxyacid dehydrogenase family. PdxB subfamily. In terms of assembly, homodimer.

It is found in the cytoplasm. It carries out the reaction 4-phospho-D-erythronate + NAD(+) = (R)-3-hydroxy-2-oxo-4-phosphooxybutanoate + NADH + H(+). Its pathway is cofactor biosynthesis; pyridoxine 5'-phosphate biosynthesis; pyridoxine 5'-phosphate from D-erythrose 4-phosphate: step 2/5. Catalyzes the oxidation of erythronate-4-phosphate to 3-hydroxy-2-oxo-4-phosphonooxybutanoate. The chain is Erythronate-4-phosphate dehydrogenase from Pseudoalteromonas atlantica (strain T6c / ATCC BAA-1087).